The sequence spans 300 residues: Protoheme IX farnesyltransferase (300 aa).

9 consecutive transmembrane segments (helical) span residues 24–44 (VTQL…PGMV), 48–68 (VLIG…AINC), 94–114 (PQIL…LYTF), 118–138 (LTMW…TLLL), 146–166 (IVIG…AVTG), 172–192 (AWIL…VLAL), 217–237 (LHIL…FISG), 239–259 (SGAV…AYAW), and 278–298 (IVYL…RPLL).

Belongs to the UbiA prenyltransferase family. Protoheme IX farnesyltransferase subfamily.

It is found in the cell inner membrane. The catalysed reaction is heme b + (2E,6E)-farnesyl diphosphate + H2O = Fe(II)-heme o + diphosphate. Its pathway is porphyrin-containing compound metabolism; heme O biosynthesis; heme O from protoheme: step 1/1. Converts heme B (protoheme IX) to heme O by substitution of the vinyl group on carbon 2 of heme B porphyrin ring with a hydroxyethyl farnesyl side group. The chain is Protoheme IX farnesyltransferase from Burkholderia vietnamiensis (strain G4 / LMG 22486) (Burkholderia cepacia (strain R1808)).